Reading from the N-terminus, the 54-residue chain is UPF0181 protein PM0480 (54 aa).

It belongs to the UPF0181 family.

The sequence is that of UPF0181 protein PM0480 from Pasteurella multocida (strain Pm70).